Here is a 184-residue protein sequence, read N- to C-terminus: ATP synthase subunit b, chloroplastic (184 aa).

A helical membrane pass occupies residues Leu27–Leu49.

It belongs to the ATPase B chain family. In terms of assembly, F-type ATPases have 2 components, F(1) - the catalytic core - and F(0) - the membrane proton channel. F(1) has five subunits: alpha(3), beta(3), gamma(1), delta(1), epsilon(1). F(0) has four main subunits: a(1), b(1), b'(1) and c(10-14). The alpha and beta chains form an alternating ring which encloses part of the gamma chain. F(1) is attached to F(0) by a central stalk formed by the gamma and epsilon chains, while a peripheral stalk is formed by the delta, b and b' chains.

Its subcellular location is the plastid. It is found in the chloroplast thylakoid membrane. Functionally, f(1)F(0) ATP synthase produces ATP from ADP in the presence of a proton or sodium gradient. F-type ATPases consist of two structural domains, F(1) containing the extramembraneous catalytic core and F(0) containing the membrane proton channel, linked together by a central stalk and a peripheral stalk. During catalysis, ATP synthesis in the catalytic domain of F(1) is coupled via a rotary mechanism of the central stalk subunits to proton translocation. Component of the F(0) channel, it forms part of the peripheral stalk, linking F(1) to F(0). This chain is ATP synthase subunit b, chloroplastic, found in Barbarea verna (Land cress).